A 496-amino-acid polypeptide reads, in one-letter code: Maturase K (496 aa).

The protein belongs to the intron maturase 2 family. MatK subfamily.

Its subcellular location is the plastid. The protein localises to the chloroplast. Its function is as follows. Usually encoded in the trnK tRNA gene intron. Probably assists in splicing its own and other chloroplast group II introns. This is Maturase K from Paeonia officinalis (Common peony).